The sequence spans 505 residues: Proton-coupled zinc antiporter SLC30A1 (505 aa).

Residues 1–10 (MGCWGRNRGR) lie on the Cytoplasmic side of the membrane. The chain crosses the membrane as a helical span at residues 11-31 (LLCMLALTFMFMVLEVVVSRV). The Extracellular segment spans residues 32 to 35 (TSSL). The chain crosses the membrane as a helical span at residues 36 to 56 (AMLSDSFHMLSDVLALVVALV). 2 residues coordinate Zn(2+): His43 and Asp47. The Cytoplasmic segment spans residues 57 to 80 (AERFARRTHATQKNTFGWIRAEVM). Residues 81–101 (GALVNAIFLTGLCFAILLEAI) traverse the membrane as a helical segment. Topologically, residues 102-113 (ERFVEPHEMQQP) are extracellular. A helical transmembrane segment spans residues 114–134 (LVVLGVGVAGLLVNVLGLCLF). Residues 135–246 (HHHSGFSQDS…RAGQLNMRGV (112 aa)) lie on the Cytoplasmic side of the membrane. The disordered stretch occupies residues 142–215 (QDSGHSHSHG…DPEKPRSGDT (74 aa)). A compositionally biased stretch (polar residues) spans 187–199 (TNTLVANTSNSNG). The span at 203–214 (DPADPEKPRSGD) shows a compositional bias: basic and acidic residues. A helical membrane pass occupies residues 247 to 267 (FLHVLGDALGSVIVVVNALVF). Zn(2+) contacts are provided by His249 and Asp253. At 268–306 (YFSWKGCSEGDFCVNPCFPDPCKAFVEIINSTHASVYEA) the chain is on the extracellular side. Asn297 is a glycosylation site (N-linked (GlcNAc...) asparagine). Residues 307–327 (GPCWVLYLDPTLCVVMVCILL) traverse the membrane as a helical segment. At 328-505 (YTTYPLLKES…MPNKQPESSL (178 aa)) the chain is on the cytoplasmic side. Position 504 is a phosphoserine (Ser504).

It belongs to the cation diffusion facilitator (CDF) transporter (TC 2.A.4) family. SLC30A subfamily. Homodimer. Interacts with TMEM163. Interacts and forms a complex with TMC6 and TMC8; the interaction regulates zinc transport into the ER.

It is found in the cell membrane. It localises to the basolateral cell membrane. The protein resides in the cytoplasmic vesicle membrane. The protein localises to the cytoplasm. Its subcellular location is the endoplasmic reticulum membrane. It is found in the golgi apparatus membrane. It localises to the nucleus membrane. The catalysed reaction is Zn(2+)(in) + 2 H(+)(out) = Zn(2+)(out) + 2 H(+)(in). In terms of biological role, zinc ion:proton antiporter that could function at the plasma membrane mediating zinc efflux from cells against its electrochemical gradient protecting them from intracellular zinc accumulation and toxicity. Alternatively, could prevent the transport to the plasma membrane of CACNB2, the L-type calcium channels regulatory subunit, through a yet to be defined mechanism. By modulating the expression of these channels at the plasma membrane, could prevent calcium and zinc influx into cells. By the same mechanism, could also prevent L-type calcium channels-mediated heavy metal influx into cells. In some cells, could also function as a zinc ion:proton antiporter mediating zinc entry into the lumen of cytoplasmic vesicles. In macrophages, can increase zinc ions concentration into the lumen of cytoplasmic vesicles containing engulfed bacteria and could help inactivate them. Forms a complex with TMC6/EVER1 and TMC8/EVER2 at the ER membrane of keratynocytes which facilitates zinc uptake into the ER. Down-regulates the activity of transcription factors induced by zinc and cytokines. In Macaca fascicularis (Crab-eating macaque), this protein is Proton-coupled zinc antiporter SLC30A1.